Reading from the N-terminus, the 219-residue chain is MENYFVNSEKKHLIQSSISSYESIHKTIGAVPTVIEQSGRGERAFDIYSRLLRERIIFLGSGINDQVSDSLVAQLLFLEAEDPEKDIQIYINSPGGSVTAGMAIYDTMQQISPDVVTICFGVAASMGAFLLSGGAKGKRLALPNSRIMIHQPLGGAQGQAVEIEIQAKEILFLKKTLNSLLAEHTGQPLEKINEDTERDYFLSPSEAVEYGLIDKVIKK.

The active-site Nucleophile is the S125. Residue H150 is part of the active site.

This sequence belongs to the peptidase S14 family. As to quaternary structure, fourteen ClpP subunits assemble into 2 heptameric rings which stack back to back to give a disk-like structure with a central cavity, resembling the structure of eukaryotic proteasomes.

It localises to the cytoplasm. It carries out the reaction Hydrolysis of proteins to small peptides in the presence of ATP and magnesium. alpha-casein is the usual test substrate. In the absence of ATP, only oligopeptides shorter than five residues are hydrolyzed (such as succinyl-Leu-Tyr-|-NHMec, and Leu-Tyr-Leu-|-Tyr-Trp, in which cleavage of the -Tyr-|-Leu- and -Tyr-|-Trp bonds also occurs).. Its function is as follows. Cleaves peptides in various proteins in a process that requires ATP hydrolysis. Has a chymotrypsin-like activity. Plays a major role in the degradation of misfolded proteins. This chain is ATP-dependent Clp protease proteolytic subunit 4, found in Prochlorococcus marinus (strain MIT 9312).